The following is a 199-amino-acid chain: MIQISDTAKSHFLKLIQREGVPGMGVRLSAVDPGTPRADARLEFADPSELVGDEWLIDCGDFTLYVASASVAWLDGAEIDYVTQATGSQQLIIKAPKIKGQELSQVASLVERVCWVVENEINPQLASHGGRVEVQEVSAEGVVLLRFGGGCHGCGMADVTLKQGVEKTLMERVHGVIAVRDATDHSTGAAPYISRDFSP.

[4Fe-4S] cluster-binding residues include cysteine 151 and cysteine 154.

It belongs to the NfuA family. As to quaternary structure, homodimer. [4Fe-4S] cluster is required as a cofactor.

In terms of biological role, involved in iron-sulfur cluster biogenesis. Binds a 4Fe-4S cluster, can transfer this cluster to apoproteins, and thereby intervenes in the maturation of Fe/S proteins. Could also act as a scaffold/chaperone for damaged Fe/S proteins. In Xylella fastidiosa (strain M12), this protein is Fe/S biogenesis protein NfuA.